A 489-amino-acid polypeptide reads, in one-letter code: Adenosylhomocysteinase (489 aa).

Positions 68, 151, and 213 each coordinate substrate. 214–216 contributes to the NAD(+) binding site; that stretch reads TTT. Lys243 and Asp247 together coordinate substrate. NAD(+) contacts are provided by residues Asn248, 277-282, Glu300, Asn335, 356-358, and Asn403; these read GYGDVG and IGH.

This sequence belongs to the adenosylhomocysteinase family. NAD(+) is required as a cofactor.

It is found in the cytoplasm. The enzyme catalyses S-adenosyl-L-homocysteine + H2O = L-homocysteine + adenosine. The protein operates within amino-acid biosynthesis; L-homocysteine biosynthesis; L-homocysteine from S-adenosyl-L-homocysteine: step 1/1. Functionally, may play a key role in the regulation of the intracellular concentration of adenosylhomocysteine. The polypeptide is Adenosylhomocysteinase (Mycobacterium sp. (strain KMS)).